A 290-amino-acid chain; its full sequence is Putative beta-lactamase HcpC (290 aa).

A signal peptide spans Met-1 to Ala-25. TPR repeat units follow at residues Pro-29–Ser-62, Cys-64–Asn-98, Cys-100–Ala-133, Glu-134–Asp-170, Cys-172–Ser-205, Pro-206–Gly-242, and Cys-244–Gly-278. Cystine bridges form between Cys-56–Cys-64, Cys-92–Cys-100, Cys-128–Cys-136, Cys-164–Cys-172, Cys-200–Cys-208, Cys-236–Cys-244, and Cys-272–Cys-280.

The protein belongs to the hcp beta-lactamase family.

The protein localises to the secreted. The enzyme catalyses a beta-lactam + H2O = a substituted beta-amino acid. May hydrolyze 6-aminopenicillinic acid and 7-aminocephalosporanic acid (ACA) derivatives. The polypeptide is Putative beta-lactamase HcpC (hcpC) (Helicobacter pylori (strain ATCC 700392 / 26695) (Campylobacter pylori)).